We begin with the raw amino-acid sequence, 310 residues long: Ribosomal RNA small subunit methyltransferase H (310 aa).

S-adenosyl-L-methionine is bound by residues 32–34, aspartate 52, phenylalanine 79, aspartate 100, and glutamine 107; that span reads GGH.

It belongs to the methyltransferase superfamily. RsmH family.

It localises to the cytoplasm. The enzyme catalyses cytidine(1402) in 16S rRNA + S-adenosyl-L-methionine = N(4)-methylcytidine(1402) in 16S rRNA + S-adenosyl-L-homocysteine + H(+). Specifically methylates the N4 position of cytidine in position 1402 (C1402) of 16S rRNA. This chain is Ribosomal RNA small subunit methyltransferase H, found in Bacillus cytotoxicus (strain DSM 22905 / CIP 110041 / 391-98 / NVH 391-98).